Reading from the N-terminus, the 404-residue chain is Nuclear receptor subfamily 2 group F member 6 (404 aa).

Gly residues predominate over residues 1–15 (MAMVTGGWGGPGGDT). The interval 1–49 (MAMVTGGWGGPGGDTNGVDKAGGYPRAAEDDSASPPGAASDAEPGDEER) is disordered. Positions 33 to 42 (ASPPGAASDA) are enriched in low complexity. 2 positions are modified to phosphoserine: Ser-34 and Ser-40. Residues 53 to 128 (QVDCVVCGDK…VGMRKEAVQR (76 aa)) constitute a DNA-binding region (nuclear receptor). The segment at 56-76 (CVVCGDKSSGKHYGVFTCEGC) adopts an NR C4-type zinc-finger fold. Ser-83 carries the post-translational modification Phosphoserine. The NR C4-type zinc finger occupies 92-116 (CRSNRDCQIDQHHRNQCQYCRLKKC). The 229-residue stretch at 165-393 (PVSELIAQLL…TLIRDMLLSG (229 aa)) folds into the NR LBD domain. The interval 327–404 (LQEKAQVALT…TFNWPYGSGQ (78 aa)) is important for dimerization.

It belongs to the nuclear hormone receptor family. NR2 subfamily. In terms of assembly, binds DNA as dimer; homodimer and heterodimer with NR2F2 and probably NR2F1. Interacts with THRB. As to expression, expressed in heart, placenta, liver, skeletal muscle, kidney and pancreas.

It localises to the nucleus. Transcription factor predominantly involved in transcriptional repression. Binds to promoter/enhancer response elements that contain the imperfect 5'-AGGTCA-3' direct or inverted repeats with various spacings which are also recognized by other nuclear hormone receptors. Involved in modulation of hormonal responses. Represses transcriptional activity of the lutropin-choriogonadotropic hormone receptor/LHCGR gene, the renin/REN gene and the oxytocin-neurophysin/OXT gene. Represses the triiodothyronine-dependent and -independent transcriptional activity of the thyroid hormone receptor gene in a cell type-specific manner. The corepressing function towards thyroid hormone receptor beta/THRB involves at least in part the inhibition of THRB binding to triiodothyronine response elements (TREs) by NR2F6. Inhibits NFATC transcription factor DNA binding and subsequently its transcriptional activity. Acts as transcriptional repressor of IL-17 expression in Th-17 differentiated CD4(+) T cells and may be involved in induction and/or maintenance of peripheral immunological tolerance and autoimmunity. Involved in development of forebrain circadian clock; is required early in the development of the locus coeruleus (LC). The protein is Nuclear receptor subfamily 2 group F member 6 (NR2F6) of Homo sapiens (Human).